The following is a 753-amino-acid chain: MNWTLTNSSLDKDSITSNGNRFLIGNGYLGIRGTLEEYRKEYFPAINLAGIYDQVGEGWREPLNAPNALYTRIEVDEVEYQLPKIEPRYHELSLDYRHGILDRQTVWASNKGTIIVKSSRFASMKEKHLVVLNYSITADYDCEIIVYTGIDGSVWDIHGPHYDKVEFQKQLLRHNETEILNEKYLLESESKWNGHRLSIAAQTHENKDIVYVTEDIICNKEAKIELIESDKECLRKLTFHGKAKEEINFTKYITVFTSKDCVDYKEQSIKIVNHAKDTGYERLQEEHKNVWEQLWNISEVTIEGDDEANDALNYSLYHLHCIAPRHSKSLSIAARGLSGQTYKGAVFWDTEMFMLDFFLYTQPEVAKTLLRYRIDTLEGAKKKAKLYGYEGAFYAWESQEGGYDACSDYNVTDVFTKRPMRTYFKDKQVHISSAIVYGIRSYLNYTNDFSILAEGGAETILECAKFYYSLLEKKIGKEYYEIHDVIGPDEYHERVNNNAYTNRMAKLTFETAIDILDHEKNKDEEFYIKLLKQYEIKDLLDKLKDACNKLYIPKPKDNSDLIEQFDGFFELEDVSLEEVRSRLLHEKEYWGGAYGVASHTQVIKQADVVTMLVLFKEEYQREVLQQNLNYYEPRTEHGSSLSACMYSLLYCMCDQPQYAYPFFMKSALADWNGKGKEWAGLVYIGGTHPAAAGGAYMTAIKGFGGFQIENGVIKATPRLPKHWVRLKYRVLYQGAIYEIDASKEQVSISKIEM.

348–349 contacts substrate; it reads WD. E490 serves as the catalytic Proton donor. Substrate is bound at residue 604-605; the sequence is KQ.

The protein belongs to the glycosyl hydrolase 65 family. As to quaternary structure, homodimer.

The protein resides in the cytoplasm. It catalyses the reaction nigerose + phosphate = beta-D-glucose 1-phosphate + D-glucose. Does not require divalent metal ions. Catalyzes the reversible phosphorolysis of nigerose. Also shows a weak activity on kojibiose. This is Nigerose phosphorylase from Lachnoclostridium phytofermentans (strain ATCC 700394 / DSM 18823 / ISDg) (Clostridium phytofermentans).